We begin with the raw amino-acid sequence, 296 residues long: Fructose-bisphosphate aldolase class 1 (296 aa).

The Proton acceptor role is filled by Glu175. The Schiff-base intermediate with dihydroxyacetone-P role is filled by Lys212.

Belongs to the class I fructose-bisphosphate aldolase family.

It carries out the reaction beta-D-fructose 1,6-bisphosphate = D-glyceraldehyde 3-phosphate + dihydroxyacetone phosphate. It participates in carbohydrate degradation; glycolysis; D-glyceraldehyde 3-phosphate and glycerone phosphate from D-glucose: step 4/4. The sequence is that of Fructose-bisphosphate aldolase class 1 from Staphylococcus aureus (strain bovine RF122 / ET3-1).